The chain runs to 487 residues: 2-aminomuconic semialdehyde dehydrogenase (487 aa).

231-236 provides a ligand contact to NAD(+); it reads GSQPTA. The active-site Proton acceptor is glutamate 253. The active-site Nucleophile is the cysteine 287. Serine 362 carries the phosphoserine modification.

Belongs to the aldehyde dehydrogenase family. As to expression, detected in hepatocytes and in proximal and distal convoluted tubules in kidney cortex (at protein level). Highly expressed in adult liver and in kidney cortex. First detected in embryonic liver after 15 days of development.

The protein resides in the cytoplasm. The catalysed reaction is 2-aminomuconate 6-semialdehyde + NAD(+) + H2O = (2Z,4E)-2-aminomuconate + NADH + 2 H(+). It participates in amino-acid degradation; L-kynurenine degradation. Catalyzes the NAD-dependent oxidation of 2-aminomuconic semialdehyde of the kynurenine metabolic pathway in L-tryptophan degradation. The sequence is that of 2-aminomuconic semialdehyde dehydrogenase (Aldh8a1) from Mus musculus (Mouse).